A 364-amino-acid chain; its full sequence is Serine/threonine-protein kinase ENV7 (364 aa).

3 S-palmitoyl cysteine lipidation sites follow: C13, C14, and C15. One can recognise a Protein kinase domain in the interval 30 to 364 (YRIQRLLGEG…LLNLLQDLDT (335 aa)). ATP-binding positions include 36 to 44 (LGEGGMSFV) and K69. D215 serves as the catalytic Proton acceptor.

The protein belongs to the protein kinase superfamily. Ser/Thr protein kinase family.

The protein resides in the vacuole membrane. The catalysed reaction is L-seryl-[protein] + ATP = O-phospho-L-seryl-[protein] + ADP + H(+). It catalyses the reaction L-threonyl-[protein] + ATP = O-phospho-L-threonyl-[protein] + ADP + H(+). In terms of biological role, serine/threonine-protein kinase involved in vacuolar processing and morphology. This is Serine/threonine-protein kinase ENV7 (ENV7) from Saccharomyces cerevisiae (strain ATCC 204508 / S288c) (Baker's yeast).